The primary structure comprises 48 residues: Probable protein E5A (48 aa).

This is Probable protein E5A from Bos taurus papillomavirus 4 (Bovine papillomavirus 4).